The primary structure comprises 361 residues: tRNA N6-adenosine threonylcarbamoyltransferase (361 aa).

Histidine 110 and histidine 114 together coordinate Fe cation. Residues 132 to 136, aspartate 165, glycine 178, aspartate 182, and asparagine 284 each bind substrate; that span reads LVSGG. Residue aspartate 312 coordinates Fe cation.

This sequence belongs to the KAE1 / TsaD family. Fe(2+) serves as cofactor.

The protein resides in the cytoplasm. The enzyme catalyses L-threonylcarbamoyladenylate + adenosine(37) in tRNA = N(6)-L-threonylcarbamoyladenosine(37) in tRNA + AMP + H(+). In terms of biological role, required for the formation of a threonylcarbamoyl group on adenosine at position 37 (t(6)A37) in tRNAs that read codons beginning with adenine. Is involved in the transfer of the threonylcarbamoyl moiety of threonylcarbamoyl-AMP (TC-AMP) to the N6 group of A37, together with TsaE and TsaB. TsaD likely plays a direct catalytic role in this reaction. This chain is tRNA N6-adenosine threonylcarbamoyltransferase, found in Desulfovibrio desulfuricans (strain ATCC 27774 / DSM 6949 / MB).